Reading from the N-terminus, the 135-residue chain is CTP pyrophosphohydrolase (135 aa).

A Nudix hydrolase domain is found at 2–127 (KMIEVVAAII…DIPLLEAFMA (126 aa)). Residues 34–39 (FAGGKV), arginine 72, and aspartate 118 contribute to the substrate site. Positions 37–58 (GKVEPDESQRQALVRELREELG) match the Nudix box motif.

Belongs to the Nudix hydrolase family. Monomer. Mg(2+) serves as cofactor. Mn(2+) is required as a cofactor.

It carries out the reaction CTP + H2O = CMP + diphosphate + H(+). The catalysed reaction is dCTP + H2O = dCMP + diphosphate + H(+). Hydrolase with a preference for pyrimidine substrates. Has high activity with 5-methyl-dCTP, and much lower activity with CTP, dCTP, 5-hydroxy-dCTP, 2-hydroxy-dATP and 8-hydroxy-dGTP. The chain is CTP pyrophosphohydrolase (nudG) from Escherichia coli (strain K12).